We begin with the raw amino-acid sequence, 332 residues long: Putative integrase/recombinase y4rC (332 aa).

The Core-binding (CB) domain maps to 5 to 98 (ASLAPLLESF…AIHSFFRYAA (94 aa)). The region spanning 122–307 (TLVNFLTRPE…TLAMKEAALA (186 aa)) is the Tyr recombinase domain. Active-site residues include R162, K187, H259, R262, and H285. Y294 functions as the O-(3'-phospho-DNA)-tyrosine intermediate in the catalytic mechanism.

Belongs to the 'phage' integrase family.

In Sinorhizobium fredii (strain NBRC 101917 / NGR234), this protein is Putative integrase/recombinase y4rC.